Consider the following 472-residue polypeptide: MIKWTMINIYLLLMFLIIKNNNNNNNYNNITKYNKDMDLYSIQSPYIKNMNIIKRGYHTSLNNKLIIVQKDNKNNNKNNLEMDNFYKWLVGFTDGDGSFYIKLNDKKYLRFFYGFRMHIDDKACLEKIRNMLNMPSNFEETTKTIMLVNSQKKWLYSNIVTIFDKYPCLTIKYYSYYKWKMAMINNLNGMSYNNKDLLNIKNTINNYEVMPNLKIPYDKMNDYWILGFIEAEGSFDTSPKRNICGFNVSQHKRSINTLKAIKSYVLNNWKPIDNTPLLIKNKLLKDWDSSIKLTKPDKNGVIKLEFNRMDFLYYVILPKLYSLKWYSRKEIDFQLWKTTMEIYMKGLHNTTKGSNLLKLINNNINKKRYYSNYNISKNIIDDVLNMNTIYNYKLPYRMNSDIQRLNSMNNNNTKFINVGVFVYDLNNTLIMTFTGYRPAATYFNCSKHEIAKYIKNGNVFMNKYILKNILLD.

It is found in the mitochondrion. This is an uncharacterized protein from Saccharomyces cerevisiae (strain ATCC 204508 / S288c) (Baker's yeast).